We begin with the raw amino-acid sequence, 102 residues long: Small ubiquitin-related modifier 1-A (102 aa).

The segment at Met-1–Gly-20 is disordered. One can recognise a Ubiquitin-like domain in the interval Asp-21–Gly-98. A Glycyl lysine isopeptide (Gly-Lys) (interchain with K-? in acceptor proteins) cross-link involves residue Gly-98. Positions His-99 to Phe-102 are excised as a propeptide.

Belongs to the ubiquitin family. SUMO subfamily. In terms of assembly, interacts with sae2, ube2i, ranbp2, pias1 and pias2. Covalently attached to a number of proteins including rangap1 and ranbp2. Interacts with sox9 and sox10. Post-translationally, cleavage of precursor form by a sentrin-specific protease is necessary for function.

Its subcellular location is the nucleus membrane. The protein localises to the nucleus speckle. It is found in the cytoplasm. It localises to the nucleus. The protein resides in the PML body. Its subcellular location is the cell membrane. In terms of biological role, ubiquitin-like protein that can be covalently attached to proteins as a monomer or a lysine-linked polymer. Covalent attachment via an isopeptide bond to its substrates requires prior activation by the E1 complex sae1-sae2 and linkage to the E2 enzyme ube2i. This post-translational modification on lysine residues of proteins plays a crucial role in a number of cellular processes such as nuclear transport, DNA replication and repair, mitosis and signal transduction. Polymeric sumo1 chains are also susceptible to polyubiquitination which functions as a signal for proteasomal degradation of modified proteins. This is Small ubiquitin-related modifier 1-A (sumo1-a) from Xenopus laevis (African clawed frog).